Reading from the N-terminus, the 429-residue chain is Serine--tRNA ligase (429 aa).

235-237 serves as a coordination point for L-serine; sequence TAE. ATP is bound at residue 266–268; it reads RSE. Glutamate 289 contributes to the L-serine binding site. Residue 353–356 coordinates ATP; that stretch reads EISS. Serine 389 is an L-serine binding site.

This sequence belongs to the class-II aminoacyl-tRNA synthetase family. Type-1 seryl-tRNA synthetase subfamily. Homodimer. The tRNA molecule binds across the dimer.

It localises to the cytoplasm. It carries out the reaction tRNA(Ser) + L-serine + ATP = L-seryl-tRNA(Ser) + AMP + diphosphate + H(+). It catalyses the reaction tRNA(Sec) + L-serine + ATP = L-seryl-tRNA(Sec) + AMP + diphosphate + H(+). It functions in the pathway aminoacyl-tRNA biosynthesis; selenocysteinyl-tRNA(Sec) biosynthesis; L-seryl-tRNA(Sec) from L-serine and tRNA(Sec): step 1/1. Functionally, catalyzes the attachment of serine to tRNA(Ser). Is also able to aminoacylate tRNA(Sec) with serine, to form the misacylated tRNA L-seryl-tRNA(Sec), which will be further converted into selenocysteinyl-tRNA(Sec). The chain is Serine--tRNA ligase from Haemophilus influenzae (strain 86-028NP).